The chain runs to 78 residues: Defensin-like protein 171 (78 aa).

Positions 1–23 (MAKTASSLVLPIIFLVMFALVEQ) are cleaved as a signal peptide. Intrachain disulfides connect cysteine 27–cysteine 71, cysteine 34–cysteine 56, cysteine 40–cysteine 65, and cysteine 44–cysteine 67.

This sequence belongs to the DEFL family.

Its subcellular location is the secreted. The polypeptide is Defensin-like protein 171 (LCR61) (Arabidopsis thaliana (Mouse-ear cress)).